The sequence spans 493 residues: Trans-aconitate decarboxylase 1 (493 aa).

The segment at 1-22 is disordered; sequence MAPALNANPTTKRDELSAPSAS.

It belongs to the class-II fumarase/aspartase family.

Its subcellular location is the cytoplasm. It localises to the cytosol. The protein localises to the nucleus. It catalyses the reaction trans-aconitate + H(+) = itaconate + CO2. It participates in secondary metabolite biosynthesis. Functionally, trans-aconitate decarboxylase; part of the gene cluster that mediates the biosynthesis of itaconic acid and 2-hydroxyparaconate. Cis-aconitate is secreted by the mitochondrial tricarboxylate transporter MTT1. In the cytosol cis-aconitate is converted into trans-aconitate via isomerization by the aconitate-delta-isomerase ADI1. Decarboxylation of trans-aconitate by the trans-aconitate decarboxylase TAD1 then leads then to the production of itaconic acid. The cytochrome P450 monooxygenase CYP3 further converts itaconate to 2-hydroxyparaconate via oxidation of the double bond, leading to a transient epoxide, which can subsequently be lactonized to produce 2-hydroxyparaconate. Secretion of itaconate and possibly 2-hydroxyparaconate into the medium is mediated by the major facilitator ITP1. The glyoxalase domain-containing protein RDO1 is not involved in the biosynthesis of itaconate and 2-hydroxyparaconate, however, it might play a role in the further conversion of 2-hydroxyparaconate to itatartarate. This is Trans-aconitate decarboxylase 1 from Mycosarcoma maydis (Corn smut fungus).